Consider the following 1019-residue polypeptide: MKSYCLLLSITLSCCCSAEDLPDPPSIHLNSKYLPNQAEAILTAGTPFTLRCTGASSVHWSSSAFCLLYHGRLVDPIDVQRADPRHTGTYCCGYTNQSLEHLSTWIHLYVKDPADPSTVFVTPRNSPRVKEGQDFLYRCLLTDPSVTNLTFQPEDNIQGSGQHLPVGMNVTVDPQRGALIQDVQRSFSGQYVCSGWKDGRHFISRSFHLLVAPRLPPPSVAIHQNKAVRLEGEKFEVTCVSSSTTHLFNVTWTHLTKKNFDVAVTREYRNSHMYISSTLMIAAVSQEDRGTYTCAAASEDGVTTATTHLIVLDSRFMTTYLKTWHANTKAKNKEISKEIDGNLTANSTSIDIEANRSSKLHMKMELIANVSTDGVHVNNISSSTTVEAYEGLDVILTFVTESYPPLSNQSWTKPTKVNNNNNVTMYQENYSINDTRSEASLLLRRVRQEDHGSYTFHFSNSFFSGSQNIDLRIYRSPSAIISVEKNTLTCSSSGYPVPTIAWYSCPGILKTCGNLTTTESSEADPTSEHDEENVRKLLNLPLSTGGDVTAECIASNQVGAFRKVFHLREHNSAFMSALIGAGSTAAILFLLLLVVFYKWRQKPKYEIRWKIIESTEGNHYTFVDPTLLPYNYKWEFPRDKLRLGAVLGSGAFGKVVEATAYGLGTDDVTRVAVKMLKPRALSEEREALMSELKILSHLGYHDNIVNLLGACTQGGPMLMITEYCSYGDLLNFLRARAQDFMASILSADEMEGDPFYKNMATLYGRLRSDSGISCCSDYQEMQPILGSAEKQQGVQMGGLSFGDLLSFSHQVAQGLDFLSTRNCIHRDVAARNVLLTDHRVAKICDFGLARDIQNDDSYIVQGNARLPVKWMAPESIFQCVYTVQSDVWSYGVLLWEIFSLGKSPYPNVAVDTHFYKMIKDGRHMTQPDFAPVEMYQLMTHCWSLEPTDRPTFKMICQLIDRLLQSNDDTNHQSYSNINETKKDDFKGGKSQRRGEEEEQRRQRGNLWIPLSVTNIYQLS.

The N-terminal stretch at 1-18 is a signal peptide; sequence MKSYCLLLSITLSCCCSA. Residues 19–576 lie on the Extracellular side of the membrane; it reads EDLPDPPSIH…LREHNSAFMS (558 aa). Ig-like C2-type domains lie at 37 to 109, 106 to 212, and 224 to 312; these read QAEA…IHLY, IHLY…LLVA, and QNKA…LIVL. Cysteines 52 and 92 form a disulfide. 14 N-linked (GlcNAc...) asparagine glycosylation sites follow: N96, N148, N169, N249, N342, N346, N355, N369, N379, N408, N422, N429, N433, and N514. 2 cysteine pairs are disulfide-bonded: C139/C193 and C239/C294. Ig-like C2-type domains are found at residues 383-474 and 487-567; these read STTV…LRIY and TLTC…VFHL. Cysteines 490 and 552 form a disulfide. The chain crosses the membrane as a helical span at residues 577–597; that stretch reads ALIGAGSTAAILFLLLLVVFY. Over 598 to 1019 the chain is Cytoplasmic; that stretch reads KWRQKPKYEI…LSVTNIYQLS (422 aa). The segment at 601–633 is regulatory juxtamembrane domain; the sequence is QKPKYEIRWKIIESTEGNHYTFVDPTLLPYNYK. Y620 bears the Phosphotyrosine; by autocatalysis mark. Residues 641-963 enclose the Protein kinase domain; it reads LRLGAVLGSG…MICQLIDRLL (323 aa). ATP contacts are provided by residues 647 to 655 and K674; that span reads LGSGAFGKV. Y756 and Y778 each carry phosphotyrosine; by autocatalysis. D827 functions as the Proton acceptor in the catalytic mechanism. The tract at residues 845-867 is activation loop; sequence DFGLARDIQNDDSYIVQGNARLP. Phosphotyrosine; by autocatalysis is present on residues Y858 and Y974. Positions 970–1001 are disordered; that stretch reads NHQSYSNINETKKDDFKGGKSQRRGEEEEQRR. Residues 979-1001 show a composition bias toward basic and acidic residues; the sequence is ETKKDDFKGGKSQRRGEEEEQRR. Y1016 is modified (phosphotyrosine; by autocatalysis).

The protein belongs to the protein kinase superfamily. Tyr protein kinase family. CSF-1/PDGF receptor subfamily. As to quaternary structure, monomer. Homodimer. Interacts with CSF1. Post-translationally, autophosphorylated in response to CSF1 binding. autophosphorylation, leading to its degradation. In terms of processing, ubiquitinated. Becomes rapidly polyubiquitinated after autophosphorylation, leading to its degradation.

The protein resides in the cell membrane. It catalyses the reaction L-tyrosyl-[protein] + ATP = O-phospho-L-tyrosyl-[protein] + ADP + H(+). Its activity is regulated as follows. Present in an inactive conformation in the absence of bound ligand. CSF1 binding leads to dimerization and activation by autophosphorylation on tyrosine residues. Its function is as follows. Tyrosine-protein kinase that acts as a cell-surface receptor for CSF1 and plays an essential role in the regulation of survival, proliferation and differentiation of hematopoietic precursor cells, especially mononuclear phagocytes, such as macrophages and monocytes. Plays an important role in innate immunity and in inflammatory processes. Plays an important role in the regulation of osteoclast proliferation and differentiation, the regulation of bone resorption, and is required for normal bone development. Promotes reorganization of the actin cytoskeleton, regulates formation of membrane ruffles, cell adhesion and cell migration. Activates several signaling pathways in response to ligand binding. The polypeptide is Macrophage colony-stimulating factor 1 receptor 2 (csf1r2) (Takifugu rubripes (Japanese pufferfish)).